The chain runs to 567 residues: MNYKKYKGYETIVLEDRNWPSRKIEKAPQWCSVDLRDGNQALITPMGLKQKLRFFEYLVKMGFKTIEIGFPAASDTEYEFTRTLIEEGYIPEDVTIQVLTQSRIQIINKTFEALKGTKNAVVHLYNSTSTLQREVVFRNSKEETIELAVFGARAIKELALKNPETNFTFEYSPESFTGTEMDFAAEICNSVIDVWKPTKDKKVIINLPSTVEMATPNTYADQIEYMCRNLKSRENIIVSLHAHNDRGTGVAATELGLMAGADRVEGTLFGNGERTGNADILNLGMNLYTQGINPELDFSDINSMIEIYEESTAMNVHPRHPYAGDLVFTAFSGSHQDAIKKGMARMNKQAQYWEVPYLPLDPKDIGKSYEPIIRINSQSGKGGVSFILEQNYGLYIPKDFQKDAGRVITAYSDKMQTEIGAEEIYEVFLNEYVDIRTPLQLNYHKTQSVDSDWDLVFIEAEIEYNMQKHYVQAEGNGVVSAFCNSLKEIIGMDIDIVDYRGHSMEYGTKAKAISYIELKNETGERFYGAGTSSSVGKSSLRAVVSAINKMILAQQTKDMDTQEEDIA.

The Pyruvate carboxyltransferase domain maps to 28–302 (PQWCSVDLRD…NPELDFSDIN (275 aa)). Residues Asp37, His241, His243, and Asn277 each contribute to the Mg(2+) site. Residues 435–567 (IRTPLQLNYH…DMDTQEEDIA (133 aa)) form a regulatory domain region.

Belongs to the alpha-IPM synthase/homocitrate synthase family. LeuA type 2 subfamily. Homodimer. Requires Mg(2+) as cofactor.

The protein resides in the cytoplasm. It carries out the reaction 3-methyl-2-oxobutanoate + acetyl-CoA + H2O = (2S)-2-isopropylmalate + CoA + H(+). Its pathway is amino-acid biosynthesis; L-leucine biosynthesis; L-leucine from 3-methyl-2-oxobutanoate: step 1/4. Catalyzes the condensation of the acetyl group of acetyl-CoA with 3-methyl-2-oxobutanoate (2-ketoisovalerate) to form 3-carboxy-3-hydroxy-4-methylpentanoate (2-isopropylmalate). This chain is 2-isopropylmalate synthase, found in Acetoanaerobium sticklandii (strain ATCC 12662 / DSM 519 / JCM 1433 / CCUG 9281 / NCIMB 10654 / HF) (Clostridium sticklandii).